A 342-amino-acid chain; its full sequence is Mitogen-activated protein kinase kinase kinase 20 (342 aa).

One can recognise a Protein kinase domain in the interval Trp3–Val268. Residue Ile9–Val17 participates in ATP binding. The residue at position 18 (Ser18) is a Phosphoserine. A Phosphothreonine modification is found at Thr19. An ATP-binding site is contributed by Lys36. 2 positions are modified to phosphotyrosine: Tyr41 and Tyr66. Phosphoserine is present on residues Ser93 and Ser114. Asp131 functions as the Proton acceptor in the catalytic mechanism. The tract at residues Lys285–Arg342 is required for MKK3 binding.

It belongs to the protein kinase superfamily. Ser/Thr protein kinase family. In terms of assembly, interacts with MKK3 and MPK18 via its C-terminal domain. Binds to MKK5. Post-translationally, autophosphorylates; active in phosphorylated state. Dephosphorylated by ABI1. In terms of tissue distribution, expressed in roots, seedlings, leaves, flower buds, flowers and siliques.

Its subcellular location is the nucleus. It is found in the cytoplasm. It catalyses the reaction L-seryl-[protein] + ATP = O-phospho-L-seryl-[protein] + ADP + H(+). The catalysed reaction is L-threonyl-[protein] + ATP = O-phospho-L-threonyl-[protein] + ADP + H(+). With respect to regulation, activated through serine, threonine and tyrosine phosphorylation, especially upon abscisic acid (ABA) treatment. Restricted activity by ABI1-mediated dephosphorylation. Its function is as follows. Mitogen-activated protein kinase kinase (MAPKK) that phosphorylates both MKK3 and MPK18 and regulate two separate signaling pathways involved in root microtubule functions. MAPKK which regulates abscisic acid (ABA) responses in a MAPKKK20-MKK5-MPK6 cascade involved in root growth (e.g. root cell division and elongation) and stomatal response, probably via MKK5 activation by protein phosphorylation and subsequent activation of MAPK6 by MKK5. Involved in various abiotic stresses (e.g. osmotic stress, cold and hydrogen peroxide) responses by phosphorylating and thus regulating MPK6 activity, in an ABA-independent manner. This is Mitogen-activated protein kinase kinase kinase 20 from Arabidopsis thaliana (Mouse-ear cress).